Reading from the N-terminus, the 93-residue chain is MIKENSYFAGNVKSLGFNQQGEDSSVGVMLPGNYTFGTDAPERMTVVKGALVIKREGDEEWSTYQAGEAFEVAGKSSFDLQVEVATAYLCEYL.

It belongs to the nucleoside phosphorylase PpnP family.

It carries out the reaction a purine D-ribonucleoside + phosphate = a purine nucleobase + alpha-D-ribose 1-phosphate. The catalysed reaction is adenosine + phosphate = alpha-D-ribose 1-phosphate + adenine. The enzyme catalyses cytidine + phosphate = cytosine + alpha-D-ribose 1-phosphate. It catalyses the reaction guanosine + phosphate = alpha-D-ribose 1-phosphate + guanine. It carries out the reaction inosine + phosphate = alpha-D-ribose 1-phosphate + hypoxanthine. The catalysed reaction is thymidine + phosphate = 2-deoxy-alpha-D-ribose 1-phosphate + thymine. The enzyme catalyses uridine + phosphate = alpha-D-ribose 1-phosphate + uracil. It catalyses the reaction xanthosine + phosphate = alpha-D-ribose 1-phosphate + xanthine. Catalyzes the phosphorolysis of diverse nucleosides, yielding D-ribose 1-phosphate and the respective free bases. Can use uridine, adenosine, guanosine, cytidine, thymidine, inosine and xanthosine as substrates. Also catalyzes the reverse reactions. The protein is Pyrimidine/purine nucleoside phosphorylase of Vibrio vulnificus (strain CMCP6).